A 169-amino-acid chain; its full sequence is Non-specific lipid transfer protein GPI-anchored 11 (169 aa).

An N-terminal signal peptide occupies residues 1-23 (MAYATILMIFSVVALMSGERAHA). 4 disulfide bridges follow: Cys27/Cys70, Cys37/Cys54, Cys55/Cys95, and Cys68/Cys105. Residue Ser146 is the site of GPI-anchor amidated serine attachment. Positions 147-169 (SDASLLSVSFAFVIFMALISSFY) are cleaved as a propeptide — removed in mature form.

This sequence belongs to the plant LTP family. As to expression, expressed in a vascular-specific manner, mainly in roots, and, to a lower extent, in hypocotyls, seedlings stems and flowers.

It is found in the cell membrane. The protein resides in the secreted. In terms of biological role, probable lipid transfer protein. Proteoglycan-like factor that exhibits xylogen activity consisting in mediating local and inductive cell-cell interactions required for xylem differentiation. This Arabidopsis thaliana (Mouse-ear cress) protein is Non-specific lipid transfer protein GPI-anchored 11.